The sequence spans 143 residues: Large ribosomal subunit protein uL11 (143 aa).

Belongs to the universal ribosomal protein uL11 family. As to quaternary structure, part of the ribosomal stalk of the 50S ribosomal subunit. Interacts with L10 and the large rRNA to form the base of the stalk. L10 forms an elongated spine to which L12 dimers bind in a sequential fashion forming a multimeric L10(L12)X complex. In terms of processing, one or more lysine residues are methylated.

Functionally, forms part of the ribosomal stalk which helps the ribosome interact with GTP-bound translation factors. The chain is Large ribosomal subunit protein uL11 from Paenarthrobacter aurescens (strain TC1).